Consider the following 252-residue polypeptide: Hydroxyacylglutathione hydrolase (252 aa).

Residues His52, His54, Asp56, His57, His107, Asp128, and His166 each contribute to the Zn(2+) site.

It belongs to the metallo-beta-lactamase superfamily. Glyoxalase II family. Monomer. Zn(2+) is required as a cofactor.

The enzyme catalyses an S-(2-hydroxyacyl)glutathione + H2O = a 2-hydroxy carboxylate + glutathione + H(+). Its pathway is secondary metabolite metabolism; methylglyoxal degradation; (R)-lactate from methylglyoxal: step 2/2. Thiolesterase that catalyzes the hydrolysis of S-D-lactoyl-glutathione to form glutathione and D-lactic acid. This is Hydroxyacylglutathione hydrolase from Neisseria meningitidis serogroup C / serotype 2a (strain ATCC 700532 / DSM 15464 / FAM18).